Here is a 472-residue protein sequence, read N- to C-terminus: Carboxypeptidase E (472 aa).

The N-terminal stretch at 1-21 (MLHAMRPVLLVAALLAVTAHA) is a signal peptide. The region spanning 39–359 (HYHNQAQLEA…KSIFEYVWKS (321 aa)) is the Peptidase M14 domain. 2 residues coordinate Zn(2+): His-101 and Glu-104. Asn-134 carries N-linked (GlcNAc...) asparagine glycosylation. His-232 contributes to the Zn(2+) binding site. The active-site Proton donor/acceptor is Glu-329. 2 N-linked (GlcNAc...) asparagine glycosylation sites follow: Asn-385 and Asn-428.

Belongs to the peptidase M14 family. Zn(2+) is required as a cofactor. Expression is restricted to the nervous system.

The protein localises to the cell projection. It localises to the axon. It is found in the perikaryon. The protein resides in the cytoplasmic vesicle. Its subcellular location is the secretory vesicle lumen. The enzyme catalyses Release of C-terminal arginine or lysine residues from polypeptides.. Functionally, during FMRFamide-like peptide (FaRPs or FLP) and neuropeptide-like protein (NLP) precursor processing, catalyzes the removal of Arg or Lys residues from the C-terminus following the initial endoprotease cleavage. By processing neuropeptides, modulates basal acetylcholine release at the ventral cord neuromuscular junctions. Involved in egg-laying, defecation and locomotion. By processing FLP neuropeptides, regulates the turning step of male mating behavior. Involved in reducing pharyngeal pumping in response to high CO(2) levels. The sequence is that of Carboxypeptidase E from Caenorhabditis elegans.